Here is a 328-residue protein sequence, read N- to C-terminus: Cell division protein ZipA (328 aa).

Over 1–6 (MMQDLR) the chain is Periplasmic. The helical transmembrane segment at 7–27 (LILIVVGAIAIIALLLHGLWT) threads the bilayer. The Cytoplasmic portion of the chain corresponds to 28-328 (SRKERSSLFR…REVLDANTIA (301 aa)). A compositionally biased stretch (basic and acidic residues) spans 61-72 (GEVRVRTSHPQE). The disordered stretch occupies residues 61-183 (GEVRVRTSHP…EPVAPAPEAK (123 aa)). 2 stretches are compositionally biased toward polar residues: residues 95–104 (KSAQVKTASR) and 164–174 (APQQHVESQQE).

This sequence belongs to the ZipA family. In terms of assembly, interacts with FtsZ via their C-terminal domains.

Its subcellular location is the cell inner membrane. In terms of biological role, essential cell division protein that stabilizes the FtsZ protofilaments by cross-linking them and that serves as a cytoplasmic membrane anchor for the Z ring. Also required for the recruitment to the septal ring of downstream cell division proteins. The protein is Cell division protein ZipA of Yersinia pestis bv. Antiqua (strain Antiqua).